The sequence spans 281 residues: D-arabinitol 2-dehydrogenase [ribulose-forming] (281 aa).

Residues Leu-31 and Asn-52 each coordinate NADP(+). Catalysis depends on Ser-169, which acts as the Proton donor. Residues Tyr-184, Lys-188, Ile-217, and Thr-219 each contribute to the NADP(+) site. Residue Tyr-184 is the Proton acceptor of the active site. Lys-188 acts as the Lowers pKa of active site Tyr in catalysis.

This sequence belongs to the short-chain dehydrogenases/reductases (SDR) family.

It carries out the reaction D-arabinitol + NAD(+) = D-ribulose + NADH + H(+). Its pathway is carbohydrate metabolism; D-arabinitol metabolism. The chain is D-arabinitol 2-dehydrogenase [ribulose-forming] (ARD1) from Candida albicans (strain WO-1) (Yeast).